Consider the following 186-residue polypeptide: MRLNVVVAVSENWGIGKGGGLPWKIKKDMEFFKTVTTKAHPGLKNAVVMGRVTWESIPESFKPLKDRINIVVSSTLSHAPSFVQVVPSLNAAIDLLYNEEFSSIVDEVFIIGGYRLYKEALKQSIYPVRIYCTHILSEVDCDTYFPKVDWDKLKKVDLPDIPADTFTENGFTFKFCVYDVPSEQFI.

Residues 2–180 (RLNVVVAVSE…FTFKFCVYDV (179 aa)) enclose the DHFR domain. NADP(+) is bound by residues A8 and 14–20 (GIGKGGG). Residue 28 to 33 (DMEFFK) coordinates substrate. 51–53 (RVT) contributes to the NADP(+) binding site. R67 is a binding site for substrate. NADP(+)-binding positions include 73–75 (SST) and 112–119 (GGYRLYKE).

This sequence belongs to the dihydrofolate reductase family. As to quaternary structure, monomer.

The catalysed reaction is (6S)-5,6,7,8-tetrahydrofolate + NADP(+) = 7,8-dihydrofolate + NADPH + H(+). It participates in cofactor biosynthesis; tetrahydrofolate biosynthesis; 5,6,7,8-tetrahydrofolate from 7,8-dihydrofolate: step 1/1. In terms of biological role, key enzyme in folate metabolism. Contributes to the de novo mitochondrial thymidylate biosynthesis pathway. Catalyzes an essential reaction for de novo glycine and purine synthesis, and for DNA precursor synthesis. The protein is Dihydrofolate reductase of Schistosoma mansoni (Blood fluke).